A 431-amino-acid polypeptide reads, in one-letter code: Glycerol-3-phosphate dehydrogenase [NAD(P)+] (431 aa).

NADPH-binding residues include Ser79, Phe80, Arg100, and Lys173. 2 residues coordinate sn-glycerol 3-phosphate: Lys173 and Gly201. Residue Ala205 participates in NADPH binding. Lys256, Asp309, Ser319, Arg320, and Asn321 together coordinate sn-glycerol 3-phosphate. Catalysis depends on Lys256, which acts as the Proton acceptor. Arg320 provides a ligand contact to NADPH. An NADPH-binding site is contributed by Glu346.

Belongs to the NAD-dependent glycerol-3-phosphate dehydrogenase family.

It is found in the cytoplasm. The enzyme catalyses sn-glycerol 3-phosphate + NAD(+) = dihydroxyacetone phosphate + NADH + H(+). The catalysed reaction is sn-glycerol 3-phosphate + NADP(+) = dihydroxyacetone phosphate + NADPH + H(+). It participates in membrane lipid metabolism; glycerophospholipid metabolism. Its function is as follows. Catalyzes the reduction of the glycolytic intermediate dihydroxyacetone phosphate (DHAP) to sn-glycerol 3-phosphate (G3P), the key precursor for phospholipid synthesis. This is Glycerol-3-phosphate dehydrogenase [NAD(P)+] from Psychrobacter cryohalolentis (strain ATCC BAA-1226 / DSM 17306 / VKM B-2378 / K5).